A 1477-amino-acid chain; its full sequence is Putative insulin-like peptide receptor (1477 aa).

An N-terminal signal peptide occupies residues 1 to 24; it reads MMRNVQSFYFLFLLIVLNFHVVLS. The Extracellular segment spans residues 25 to 980; that stretch reads AVCIGQRATT…LSVTKNNNQL (956 aa). Residues Asn55, Asn255, Asn300, Asn325, Asn457, Asn491, Asn549, Asn644, Asn732, Asn791, Asn874, Asn895, and Asn957 are each glycosylated (N-linked (GlcNAc...) asparagine). 2 Fibronectin type-III domains span residues 652–750 and 780–869; these read EPLG…IKAD and NKSP…IVQA. The Fibronectin type-III 3 domain maps to 880 to 971; the sequence is LDSKMVRVQV…EEIHFKVAEL (92 aa). A helical transmembrane segment spans residues 981 to 1001; sequence IIGIISAVSAVIVALLVFILL. The Cytoplasmic segment spans residues 1002–1477; that stretch reads YMFLHRKLEK…EIFYGKPIPV (476 aa). The Protein kinase domain occupies 1044–1315; that stretch reads IELIRELGQG…LENEVDDDFV (272 aa). Residues 1050–1058 and Lys1077 contribute to the ATP site; that span reads LGQGSFGMV. The active-site Proton acceptor is the Asp1175. A Phosphotyrosine; by autocatalysis modification is found at Tyr1201. Disordered stretches follow at residues 1350-1376 and 1391-1421; these read YTKG…KSKE and KYDA…SNAC. Residues 1356 to 1368 are compositionally biased toward polar residues; sequence NMQNMLSRSQNRK. Residues 1403–1412 are compositionally biased toward basic residues; it reads KKKKRPRSKR.

Belongs to the protein kinase superfamily. Tyr protein kinase family. Insulin receptor subfamily. Mn(2+) serves as cofactor. In terms of tissue distribution, expressed in dividing epithelial cells.

The protein resides in the membrane. It catalyses the reaction L-tyrosyl-[protein] + ATP = O-phospho-L-tyrosyl-[protein] + ADP + H(+). In terms of biological role, this receptor probably binds an insulin related protein and has a tyrosine-protein kinase activity. This Hydra vulgaris (Hydra) protein is Putative insulin-like peptide receptor (HTK7).